The following is a 721-amino-acid chain: Protein mu-NS (721 aa).

Positions 1–13 (MASFKGFSANTVP) are interaction with sigma-NS. Residues 1–38 (MASFKGFSANTVPVSKAKRDISSLAATPGLRSQSFTPS) are RNA-binding. The tract at residues 14–40 (VSKAKRDISSLAATPGLRSQSFTPSVD) is interaction with mu-2. The tract at residues 471 to 721 (SNDVTDGIKL…IDFSVPTDEL (251 aa)) is involved in the formation of factory-like inclusions. Coiled coils occupy residues 522-559 (PLLS…KSAQ) and 628-684 (LMNG…ALNQ).

The protein belongs to the orthoreovirus mu-NS protein family. As to quaternary structure, interacts with mu-2. Interacts with sigma-NS; in viral factories. Interacts with the inner capsid proteins lambda-1 and sigma-2, and outer capsid protein lambda-2; in viral factories. Post-translationally, the N-terminus is blocked.

The protein resides in the host cytoplasm. Non-structural protein implicated with protein sigma-NS in forming the matrix of viral factories, which are large inclusions in the host cytoplasm where replication intermediates are assembled and viral RNA replication takes place. Together with mu-2, recruits the other core proteins to these factories. Binds RNA and recruits viral mRNAs to sites of viral replication. In Reovirus type 3 (strain Dearing) (T3D), this protein is Protein mu-NS (M3).